The primary structure comprises 139 residues: MAERTFSIIKPDAVERNLSGAILKMIQDSGLKVVAMKMIHLTRSQAEGFYAVHRERPFFDSLVTYMCSGPVVCSVLEGDNAIQRYRDLMGATNPANAAEGTIRKTYAVSIEANSVHGSDAPETAAYEIAYFFNALEMVG.

Lys-10, Phe-58, Arg-86, Thr-92, Arg-103, and Asn-113 together coordinate ATP. His-116 functions as the Pros-phosphohistidine intermediate in the catalytic mechanism.

Belongs to the NDK family. In terms of assembly, homotetramer. Requires Mg(2+) as cofactor.

The protein resides in the cytoplasm. It catalyses the reaction a 2'-deoxyribonucleoside 5'-diphosphate + ATP = a 2'-deoxyribonucleoside 5'-triphosphate + ADP. The catalysed reaction is a ribonucleoside 5'-diphosphate + ATP = a ribonucleoside 5'-triphosphate + ADP. Its function is as follows. Major role in the synthesis of nucleoside triphosphates other than ATP. The ATP gamma phosphate is transferred to the NDP beta phosphate via a ping-pong mechanism, using a phosphorylated active-site intermediate. The protein is Nucleoside diphosphate kinase of Nitratidesulfovibrio vulgaris (strain DSM 19637 / Miyazaki F) (Desulfovibrio vulgaris).